The sequence spans 96 residues: Beta-defensin 20 (96 aa).

Positions 1 to 21 (MKLPQLLLILLFVVLADSVQP) are cleaved as a signal peptide. Intrachain disulfides connect Cys-24-Cys-52, Cys-32-Cys-46, and Cys-36-Cys-53.

The protein belongs to the beta-defensin family.

It is found in the secreted. Functionally, has antibacterial activity. This Rattus norvegicus (Rat) protein is Beta-defensin 20 (Defb20).